The chain runs to 1203 residues: MPRVVLNGVTVDFPFQPYPCQQEYMTKVLECLQKKVNGILESPTGTGKTLCLLCSTLAWQQHLRDAISSLKIAERVQGELFASRTLSSWGSAAAASGDSIECYTDIPKIIYASRTHSQPTQVIRELRNTAYRPKVCVLGSREQLCIHPEVKKQESNHMQISLCRKKVASRSCHFYNNVEAKFLEQDLATPILDIEDLVKNGSKQKMCPYYLSRNMKQQADIIFMPYNYLLDAKSRKAHSIDLKGTVVIFDEAHNVEKICEESASFDLTPRDVASGLEIINQVLEEQARVTQQGELQQEFIVDTSSSGLNMELEDIAKLKMILLRLEEAIDAVQLPGDDRGVTKPGSYIFELFAEAQITFQTKGCILESLDQIIQHLAGRTGVFTNTAGLQKLMDIIQIVFSVDPPEGSPGSLVGLGISHSYKVHIHPETSHRRAAKRSDAWSTTASRKQGKVLSYWCFSPSQSMRELVCQGVRTLILTSGTLAPLSSFALEKQIPFPVCLENPHIIDKNQLWVGIVPRGPDGVQLSSAYDKRFSEECLSSLGKALSNIARVVPHGLLVFFPSYPVMEKSLEFWQVQGLARKVEALKPLFVEPRNKGSFSEVIDAYYQQVASPASNGATFLAVCRGKASEGLDFSDMNGRGVIVTGLPYPPRMDPRVVLKMQFLDEMRGRSGVGGQCLSGQEWYQQQASRAVNQAIGRVIRHRHDYGAIFLCDHRFAYADARAQLPSWVRPYLKVYDNFGHAIRDVAQFLRVAQKTMPLPVPQAVTSSVSEGEIALKDATLSSYSLSTRKAISLDVHVPSLRQKSIGLPAAGDPESSLCGEYEQQTFSAQQRPMGLLAALEYNEQKAGASEEQALGSSTPSLRFEKRLSTEQKGGRKKVRLVNHPEEPMAGTQAGRAKMFMVAVKQALSQANFDTFTQALQHYKSSDDFEALVASLTCLFAEDPKKHTLLKGFYQFVRPHHKQQFEDICFQLTGQRCGYQPGKSELESKLTLSEGVDRQLDPGQHLNHGQPHLSAHPTSKGHTSHCTKVGCAVEKPGQPAVSDYLSDVHKALGSASCNQLTAALRAYKQDDDLDKVVAVVAALTTAKPEHLPLLQRFGMFVRRHHKPQFLQTCADLMGLPTTGKDLELEGPRDESPTVPPELTHEDLKPGPSMSKKPEKTQSKISSFFRQRPDESVRSDDTTPKPMQLPPRLPHELMKPHRSKQ.

Residues Asn-7–Gln-296 form the Helicase ATP-binding domain. Position 42-49 (Ser-42–Thr-49) interacts with ATP. Residues Cys-145, Cys-163, Cys-172, and Cys-207 each contribute to the [4Fe-4S] cluster site. Residues Lys-151 to Val-167 carry the Nuclear localization signal motif. The DEAH box motif lies at Asp-250–His-253. The Nuclear localization signal motif lies at Gln-871 to Lys-877. Disordered regions lie at residues Gln-998–Gly-1020 and Thr-1120–Gln-1203. Over residues Lys-1123–Ser-1134 the composition is skewed to basic and acidic residues. A PIP-box motif is present at residues Gln-1160–Phe-1167. A compositionally biased stretch (basic and acidic residues) spans Gln-1169 to Thr-1181.

It belongs to the helicase family. RAD3/XPD subfamily. Interacts with TERF1. Interacts (via PIP-box) with PCNA; the interaction is direct and essential for suppressing telomere fragility. Interacts with MMS19; the interaction mediates the association of RTEL1 with the cytosolic iron-sulfur protein assembly (CIA) complex.

Its subcellular location is the nucleus. It catalyses the reaction ATP + H2O = ADP + phosphate + H(+). Functionally, a probable ATP-dependent DNA helicase implicated in telomere-length regulation, DNA repair and the maintenance of genomic stability. Acts as an anti-recombinase to counteract toxic recombination and limit crossover during meiosis. Regulates meiotic recombination and crossover homeostasis by physically dissociating strand invasion events and thereby promotes noncrossover repair by meiotic synthesis dependent strand annealing (SDSA) as well as disassembly of D loop recombination intermediates. Also disassembles T loops and prevents telomere fragility by counteracting telomeric G4-DNA structures, which together ensure the dynamics and stability of the telomere. This chain is Regulator of telomere elongation helicase 1 (Rtel1), found in Mus spretus (Western Mediterranean mouse).